Consider the following 336-residue polypeptide: Glucokinase (336 aa).

Position 12 to 17 (12 to 17 (ADIGGT)) interacts with ATP.

This sequence belongs to the bacterial glucokinase family.

The protein resides in the cytoplasm. The enzyme catalyses D-glucose + ATP = D-glucose 6-phosphate + ADP + H(+). The sequence is that of Glucokinase from Helicobacter acinonychis (strain Sheeba).